A 956-amino-acid polypeptide reads, in one-letter code: Endogenous retrovirus group K member 8 Pol protein (956 aa).

One can recognise a Reverse transcriptase domain in the interval 57-245; that stretch reads LEKGHIEPSF…TPFHYLGMQI (189 aa). The LPQG signature appears at 161-164; that stretch reads LPQG. The short motif at 195–198 is the YXDD element; the sequence is YIDD. In terms of domain architecture, RNase H type-1 spans 460-590; sequence LENALTVFTD…ADLLVSSALI (131 aa). Residues aspartate 469, glutamate 497, aspartate 517, and aspartate 582 each coordinate Mg(2+). The Integrase-type zinc-finger motif lies at 587-628; the sequence is SALIKAQELHALTHVNAAGLKNKFDVTWKQAKDIVQHCTQCQ. Zn(2+)-binding residues include histidine 596, histidine 600, cysteine 624, and cysteine 627. Residues 642-803 form the Integrase catalytic domain; the sequence is RGLCPNALWQ…TSAEQHLTGK (162 aa). Positions 811-859 form a DNA-binding region, integrase-type; that stretch reads KLIWWKDNKNKTWEIGKVITWGRGFACVSPGENQLPVWIPTRHLKFYNE. Residues 864 to 890 form a disordered region; it reads AKKSTSAETETPQSSTVDSQDEQNGDV. Polar residues predominate over residues 869–881; it reads SAETETPQSSTVD.

This sequence belongs to the beta type-B retroviral polymerase family. HERV class-II K(HML-2) pol subfamily.

The enzyme catalyses DNA(n) + a 2'-deoxyribonucleoside 5'-triphosphate = DNA(n+1) + diphosphate. It carries out the reaction Endonucleolytic cleavage to 5'-phosphomonoester.. Early post-infection, the reverse transcriptase converts the viral RNA genome into double-stranded viral DNA. The RNase H domain of the reverse transcriptase performs two functions. It degrades the RNA template and specifically removes the RNA primer from the RNA/DNA hybrid. Following nuclear import, the integrase catalyzes the insertion of the linear, double-stranded viral DNA into the host cell chromosome. Endogenous Pol proteins may have kept, lost or modified their original function during evolution. The chain is Endogenous retrovirus group K member 8 Pol protein (ERVK-8) from Homo sapiens (Human).